The chain runs to 506 residues: Dipeptide and tripeptide permease A (506 aa).

At 1–36 (MSTANNNSESTESVSMNAFKQPKAFYLIFSIELWER) the chain is on the cytoplasmic side. A helical transmembrane segment spans residues 37–57 (FGYYGLQGIMAVYLVKMLGMS). Topologically, residues 58 to 61 (ETDS) are periplasmic. Residues 62–82 (ITLFSSFSALVYGFVAIGGWL) traverse the membrane as a helical segment. The Cytoplasmic segment spans residues 83-91 (GDKVLGTKR). 2 helical membrane-spanning segments follow: residues 92-112 (VIVL…YSGH) and 113-133 (SVAW…LFKA). The Cytoplasmic segment spans residues 134–155 (NPSALLSTCYAKDDPRLDGAFT). The chain crosses the membrane as a helical span at residues 156–176 (MYYMAVNIGSFFSMLATPVLA). The Periplasmic segment spans residues 177-180 (ANYG). Residues 181 to 201 (WSVAFSLSVVGMILTLVNFMF) form a helical membrane-spanning segment. Over 202–222 (CRKWVSTQGSQPDFQPINLKK) the chain is Cytoplasmic. Residues 223-243 (LVITLAGIVVLVALSTWLLHN) form a helical membrane-spanning segment. The Periplasmic segment spans residues 244–248 (QGVAR). A helical membrane pass occupies residues 249-269 (WILTIISLAVVAIFIKEMLAV). Residues 270 to 276 (SGAERRK) lie on the Cytoplasmic side of the membrane. Residues 277-297 (MIVALLLMLEAVVFFVLYNQM) traverse the membrane as a helical segment. Residues 298–322 (PTSLNFFAIRNVEHSILGFAFEPEQ) lie on the Periplasmic side of the membrane. The helical transmembrane segment at 323–343 (YQALNPFWIMVASPLLAAVYN) threads the bilayer. At 344 to 354 (KMGDQLPMAHK) the chain is on the cytoplasmic side. Residues 355–375 (FAIGMVLCSGAFLVLPWGASM) traverse the membrane as a helical segment. Topologically, residues 376–385 (ANEQGIVSVN) are periplasmic. Residues 386 to 406 (WLILCYGLQSIGELMISGLGL) form a helical membrane-spanning segment. Topologically, residues 407–416 (AMVAQLVPQR) are cytoplasmic. A helical transmembrane segment spans residues 417–437 (LMGFIMGAWFLTSAGAAIIAG). Residues 438–461 (YVANMMAVPENVVDPHVSLEVYSN) are Periplasmic-facing. Residues 462 to 482 (VFMQIGIVTGIIAVLMMLTAP) form a helical membrane-spanning segment. Residues 483–506 (KLTRMTQDVATDVPADAATTTASA) are Cytoplasmic-facing.

It belongs to the major facilitator superfamily. Proton-dependent oligopeptide transporter (POT/PTR) (TC 2.A.17) family. DtpA subfamily.

Its subcellular location is the cell inner membrane. In terms of biological role, proton-dependent permease that transports di- and tripeptides. In Pectobacterium carotovorum subsp. carotovorum (strain PC1), this protein is Dipeptide and tripeptide permease A.